We begin with the raw amino-acid sequence, 139 residues long: Holo-[acyl-carrier-protein] synthase (139 aa).

2 residues coordinate Mg(2+): Asp8 and Glu61.

Belongs to the P-Pant transferase superfamily. AcpS family. It depends on Mg(2+) as a cofactor.

It is found in the cytoplasm. The catalysed reaction is apo-[ACP] + CoA = holo-[ACP] + adenosine 3',5'-bisphosphate + H(+). Transfers the 4'-phosphopantetheine moiety from coenzyme A to a Ser of acyl-carrier-protein. This chain is Holo-[acyl-carrier-protein] synthase, found in Bradyrhizobium sp. (strain BTAi1 / ATCC BAA-1182).